The following is a 78-amino-acid chain: Apolipoprotein C-I (78 aa).

A signal peptide spans 1–26 (MRLILWLPVLVVVLLMVLEGPAPAQG).

It belongs to the apolipoprotein C1 family.

Its subcellular location is the secreted. Its function is as follows. Inhibitor of lipoprotein binding to the low density lipoprotein (LDL) receptor, LDL receptor-related protein, and very low density lipoprotein (VLDL) receptor. Associates with high density lipoproteins (HDL) and the triacylglycerol-rich lipoproteins in the plasma and makes up about 10% of the protein of the VLDL and 2% of that of HDL. Appears to interfere directly with fatty acid uptake and is also the major plasma inhibitor of cholesteryl ester transfer protein (CETP). Binds free fatty acids and reduces their intracellular esterification. Modulates the interaction of APOE with beta-migrating VLDL and inhibits binding of beta-VLDL to the LDL receptor-related protein. This chain is Apolipoprotein C-I (APOC1), found in Puma concolor (Mountain lion).